Reading from the N-terminus, the 365-residue chain is Protein-glutamate methylesterase/protein-glutamine glutaminase (365 aa).

The region spanning 5–122 (KVLIVDDSAF…SLDIRKIGEK (118 aa)) is the Response regulatory domain. A 4-aspartylphosphate modification is found at D56. Residues 146 to 155 (IKKEKQDESS) are compositionally biased toward basic and acidic residues. The segment at 146–167 (IKKEKQDESSTPKPQVEKTSGL) is disordered. The span at 156-167 (TPKPQVEKTSGL) shows a compositional bias: polar residues. Positions 177–363 (ILIGSSTGGP…LEIIKFAKKI (187 aa)) constitute a CheB-type methylesterase domain. Active-site residues include S182, H208, and D305.

Belongs to the CheB family. In terms of processing, phosphorylated by CheA. Phosphorylation of the N-terminal regulatory domain activates the methylesterase activity.

The protein resides in the cytoplasm. It carries out the reaction [protein]-L-glutamate 5-O-methyl ester + H2O = L-glutamyl-[protein] + methanol + H(+). The catalysed reaction is L-glutaminyl-[protein] + H2O = L-glutamyl-[protein] + NH4(+). Functionally, involved in chemotaxis. Part of a chemotaxis signal transduction system that modulates chemotaxis in response to various stimuli. Catalyzes the demethylation of specific methylglutamate residues introduced into the chemoreceptors (methyl-accepting chemotaxis proteins or MCP) by CheR. Also mediates the irreversible deamidation of specific glutamine residues to glutamic acid. This is Protein-glutamate methylesterase/protein-glutamine glutaminase from Methanococcus maripaludis (strain DSM 14266 / JCM 13030 / NBRC 101832 / S2 / LL).